The primary structure comprises 920 residues: Dynamin-B (920 aa).

The tract at residues 65–84 is disordered; sequence NSNNNNNNNNNNKINKNNNN. The Dynamin-type G domain occupies 154–448; it reads EITLPQIIVV…LTKHIRDTFP (295 aa). The tract at residues 164–171 is G1 motif; sequence GSQSSGKS. 164 to 172 contacts GTP; the sequence is GSQSSGKSS. Residues 190 to 192 form a G2 motif region; it reads VTR. Positions 204-241 are disordered; that stretch reads TTSRNNVNENEDEDEDDNYYDNDNDDNSLEEWGEFGHT. Residues 212 to 236 show a composition bias toward acidic residues; it reads ENEDEDEDDNYYDNDNDDNSLEEWG. The interval 290-293 is G3 motif; sequence DLPG. Residues 359-362 are G4 motif; sequence TKLD. Residues 359-365 and 390-393 contribute to the GTP site; these read TKLDLMD and NRSQ. Residues 389–392 form a G5 motif region; sequence VNRS. The disordered stretch occupies residues 680 to 790; that stretch reads FQSTSSTSSS…EIQIQQQQQQ (111 aa). Composition is skewed to low complexity over residues 681–705 and 724–751; these read QSTS…NSNP and QIKQ…QKQQ. Positions 724-751 form a coiled coil; that stretch reads QIKQQQQQQQQQQQQSYQQQQQQQQKQQ. Residues 765–774 are compositionally biased toward pro residues; it reads PPSPPSPPQP. Positions 775–790 are enriched in low complexity; it reads KQQQSHEIQIQQQQQQ. Residues 825 to 916 enclose the GED domain; it reads IYLLRRLLLA…SLSQSENSDL (92 aa).

The protein belongs to the TRAFAC class dynamin-like GTPase superfamily. Dynamin/Fzo/YdjA family.

The protein resides in the cytoplasm. Enzyme hydrolyzing GTP. The polypeptide is Dynamin-B (dymB) (Dictyostelium discoideum (Social amoeba)).